Here is a 420-residue protein sequence, read N- to C-terminus: G2/mitotic-specific cyclin-A (420 aa).

The tract at residues 64-93 is disordered; that stretch reads VQGSRIQPTRAAKEKLKPPQNISDSQLVND. Over residues 83–93 the composition is skewed to polar residues; that stretch reads QNISDSQLVND.

The protein belongs to the cyclin family. Cyclin AB subfamily.

Functionally, essential for the control of the cell cycle at the G2/M (mitosis) transition. Interacts with the CDC2 and CDK2 protein kinases to form MPF. G2/M cyclins accumulate steadily during G2 and are abruptly destroyed at mitosis. This Hydra viridissima (Green hydra) protein is G2/mitotic-specific cyclin-A.